Reading from the N-terminus, the 314-residue chain is MPIRIDKKLPAVEILRTENIFVMDDQRAAHQDIRPLKILILNLMPQKMVTETQLLRHLANTPLQLDIDFLYMESHRSKTTRSEHMETFYKTFPEVKDEYFDGMIITGAPVEHLPFEEVDYWEEFRQMLEWSKTHVYSTLHICWGAQAGLYLRYGVEKYQMDSKLSGIYPQDTLKEGHLLFRGFDDSYVSPHSRHTEISKEEVLNKTNLEILSEGPQVGVSILASRDLREIYSFGHLEYDRDTLAKEYFRDRDAGFDPHIPENYFKDDDVNQVPCLCWSSSAALFFSNWVNHAVYQETPFDWRKIEDDASAYGYL.

The active-site Acyl-thioester intermediate is the Cys142. Substrate-binding residues include Lys163 and Ser192. His235 serves as the catalytic Proton acceptor. Glu237 is a catalytic residue. Arg249 lines the substrate pocket.

Belongs to the MetA family.

It localises to the cytoplasm. It catalyses the reaction L-homoserine + acetyl-CoA = O-acetyl-L-homoserine + CoA. The protein operates within amino-acid biosynthesis; L-methionine biosynthesis via de novo pathway; O-acetyl-L-homoserine from L-homoserine: step 1/1. In terms of biological role, transfers an acetyl group from acetyl-CoA to L-homoserine, forming acetyl-L-homoserine. In Streptococcus pneumoniae (strain JJA), this protein is Homoserine O-acetyltransferase.